The following is a 735-amino-acid chain: Muskelin (735 aa).

A2 carries the N-acetylalanine modification. In terms of domain architecture, LisH spans 172–204 (REQEAIRLCLKHFRQHNYTEAFESLQKKTKIAL). Residues 206–258 (HPMLTDMHDKLVLKGDFDACEELIEKAVNDGLFNQYISQQEYKPRWSQIIPKS) enclose the CTLH domain. Kelch repeat units follow at residues 284-330 (TVYL…SCHK), 339-391 (QIYT…FDHQ), 400-458 (MIYT…SRIG), 469-515 (CLYV…TGFT), 526-578 (EIHV…SLQE), and 597-651 (VHYL…AQMD). Positions 701–735 (DHTYAQRTQLFDTLVNFFPDSMTPPKGNLVDLITL) are important for location in the cytosol.

Homodimer; may form higher oligomers. Identified in the CTLH complex that contains GID4, RANBP9 and/or RANBP10, MKLN1, MAEA, RMND5A (or alternatively its paralog RMND5B), GID8, ARMC8, WDR26 and YPEL5. Within this complex, MAEA, RMND5A (or alternatively its paralog RMND5B), GID8, WDR26, and RANBP9 and/or RANBP10 form the catalytic core, while GID4, MKLN1, ARMC8 and YPEL5 have ancillary roles. Interacts with RANBP9. Part of a complex consisting of RANBP9, MKLN1 and GID8. Interacts with GABRA1. Interacts with the C-terminal tail of PTGER3. As to expression, detected in brain, especially in hippocampus and cerebellum (at protein level).

The protein resides in the cytoplasm. It localises to the cytosol. The protein localises to the nucleus. Its subcellular location is the nucleoplasm. It is found in the cell projection. The protein resides in the ruffle. It localises to the cell cortex. The protein localises to the synapse. Its subcellular location is the postsynapse. In terms of biological role, component of the CTLH E3 ubiquitin-protein ligase complex that selectively accepts ubiquitin from UBE2H and mediates ubiquitination and subsequent proteasomal degradation of the transcription factor HBP1. Required for internalization of the GABA receptor GABRA1 from the cell membrane via endosomes and subsequent GABRA1 degradation. Acts as a mediator of cell spreading and cytoskeletal responses to the extracellular matrix component THBS1. This Mus musculus (Mouse) protein is Muskelin (Mkln1).